Reading from the N-terminus, the 324-residue chain is UDP-N-acetylenolpyruvoylglucosamine reductase (324 aa).

Residues 36–203 (FRAGGLAELM…TSVLFEGYPE (168 aa)) enclose the FAD-binding PCMH-type domain. The active site involves Arg183. Residue Ser232 is the Proton donor of the active site. Residue Glu302 is part of the active site.

It belongs to the MurB family. FAD is required as a cofactor.

It is found in the cytoplasm. It carries out the reaction UDP-N-acetyl-alpha-D-muramate + NADP(+) = UDP-N-acetyl-3-O-(1-carboxyvinyl)-alpha-D-glucosamine + NADPH + H(+). It functions in the pathway cell wall biogenesis; peptidoglycan biosynthesis. Cell wall formation. The sequence is that of UDP-N-acetylenolpyruvoylglucosamine reductase from Rhizobium johnstonii (strain DSM 114642 / LMG 32736 / 3841) (Rhizobium leguminosarum bv. viciae).